The chain runs to 104 residues: Ribonuclease P protein component 4 (104 aa).

4 residues coordinate Zn(2+): Cys-63, Cys-66, Cys-89, and Cys-92.

This sequence belongs to the eukaryotic/archaeal RNase P protein component 4 family. In terms of assembly, consists of a catalytic RNA component and at least 4-5 protein subunits. Zn(2+) serves as cofactor.

It localises to the cytoplasm. It carries out the reaction Endonucleolytic cleavage of RNA, removing 5'-extranucleotides from tRNA precursor.. Its function is as follows. Part of ribonuclease P, a protein complex that generates mature tRNA molecules by cleaving their 5'-ends. The sequence is that of Ribonuclease P protein component 4 from Methanosphaera stadtmanae (strain ATCC 43021 / DSM 3091 / JCM 11832 / MCB-3).